A 377-amino-acid chain; its full sequence is Guanine nucleotide exchange factor for Rab-3A (377 aa).

Residues 23–57 are disordered; sequence WKNLGPSKGNRKSPGGLVEASASWEEAGGEEHPAA. A coiled-coil region spans residues 77-128; sequence SEFLKEELYKAQKELKLKDEECERLCKVRAQLEQELEELTASLFEEAHKMVR. Residues 167-198 form a disordered region; it reads PASPNRELHPQLLSPTKAGPRKGHSRQKSTSS. Phosphoserine occurs at positions 169 and 180.

The protein belongs to the SEC2 family. As to quaternary structure, interacts with RAB3A and IHPK1 through the coiled-coil domain. This interaction is competitive. IHPK1 kinase activity is not required for this interaction. Selectively localized to the brain (at protein level).

Functionally, guanine nucleotide exchange factor (GEF) which may activate RAB3A, a GTPase that regulates synaptic vesicle exocytosis. Promotes the exchange of GDP to GTP, converting inactive GDP-bound Rab proteins into their active GTP-bound form. May also activate RAB8A and RAB8B. The chain is Guanine nucleotide exchange factor for Rab-3A (Rab3il1) from Rattus norvegicus (Rat).